The sequence spans 71 residues: Bowman-Birk type trypsin inhibitor (71 aa).

Intrachain disulfides connect Cys10–Cys67, Cys11–Cys27, Cys14–Cys63, Cys17–Cys25, Cys35–Cys42, and Cys39–Cys55.

This sequence belongs to the Bowman-Birk serine protease inhibitor family.

Inhibits trypsin but not chymotrypsin. This chain is Bowman-Birk type trypsin inhibitor, found in Triticum aestivum (Wheat).